Reading from the N-terminus, the 188-residue chain is Putative lipoprotein LprB (188 aa).

The signal sequence occupies residues M1 to G27. C28 carries N-palmitoyl cysteine lipidation. C28 carries the S-diacylglycerol cysteine lipid modification.

The protein localises to the cell membrane. The protein is Putative lipoprotein LprB (lprB) of Mycobacterium leprae (strain TN).